We begin with the raw amino-acid sequence, 375 residues long: Chaperone protein DnaJ (375 aa).

Residues 5–70 enclose the J domain; sequence DYYEVLGVER…GKRMAYDQYG (66 aa). The segment at 134 to 212 adopts a CR-type zinc-finger fold; it reads GTTVTIRVPT…CHGQGRVEEH (79 aa). Positions 147, 150, 164, 167, 186, 189, 200, and 203 each coordinate Zn(2+). CXXCXGXG motif repeat units follow at residues 147–154, 164–171, 186–193, and 200–207; these read CKTCDGSG, CTTCGGIG, CPRCHGSG, and CPDCHGQG.

This sequence belongs to the DnaJ family. In terms of assembly, homodimer. Zn(2+) serves as cofactor.

The protein localises to the cytoplasm. In terms of biological role, participates actively in the response to hyperosmotic and heat shock by preventing the aggregation of stress-denatured proteins and by disaggregating proteins, also in an autonomous, DnaK-independent fashion. Unfolded proteins bind initially to DnaJ; upon interaction with the DnaJ-bound protein, DnaK hydrolyzes its bound ATP, resulting in the formation of a stable complex. GrpE releases ADP from DnaK; ATP binding to DnaK triggers the release of the substrate protein, thus completing the reaction cycle. Several rounds of ATP-dependent interactions between DnaJ, DnaK and GrpE are required for fully efficient folding. Also involved, together with DnaK and GrpE, in the DNA replication of plasmids through activation of initiation proteins. This chain is Chaperone protein DnaJ, found in Azotobacter vinelandii (strain DJ / ATCC BAA-1303).